The primary structure comprises 422 residues: Enolase (422 aa).

Gln-161 is a (2R)-2-phosphoglycerate binding site. Residue Glu-203 is the Proton donor of the active site. Residues Asp-240, Glu-283, and Asp-310 each coordinate Mg(2+). (2R)-2-phosphoglycerate contacts are provided by Lys-335, Arg-364, Ser-365, and Lys-386. Residue Lys-335 is the Proton acceptor of the active site.

The protein belongs to the enolase family. The cofactor is Mg(2+).

The protein resides in the cytoplasm. It localises to the secreted. Its subcellular location is the cell surface. It carries out the reaction (2R)-2-phosphoglycerate = phosphoenolpyruvate + H2O. Its pathway is carbohydrate degradation; glycolysis; pyruvate from D-glyceraldehyde 3-phosphate: step 4/5. Its function is as follows. Catalyzes the reversible conversion of 2-phosphoglycerate (2-PG) into phosphoenolpyruvate (PEP). It is essential for the degradation of carbohydrates via glycolysis. The chain is Enolase from Deinococcus geothermalis (strain DSM 11300 / CIP 105573 / AG-3a).